A 120-amino-acid chain; its full sequence is MTHDVSKYALGRIAEDKACNYLSVNGYIVLDRNWYCRFGELDIIARKNGVIVAVEVKGGKRNADYPICNITVKKLSKLTFLLKAWLHENKLNEFCIDLRIDAVSVTFIPELQIRHFVGIL.

It belongs to the UPF0102 family.

The protein is UPF0102 protein TW312 of Tropheryma whipplei (strain TW08/27) (Whipple's bacillus).